The sequence spans 503 residues: Glycerol kinase (503 aa).

T12 provides a ligand contact to ADP. ATP is bound by residues T12, T13, and S14. T12 provides a ligand contact to sn-glycerol 3-phosphate. R16 lines the ADP pocket. Sn-glycerol 3-phosphate-binding residues include R82, E83, Y134, and D243. Positions 82, 83, 134, 243, and 244 each coordinate glycerol. ADP contacts are provided by T265 and G308. ATP-binding residues include T265, G308, Q312, and G412. Residue G412 coordinates ADP.

The protein belongs to the FGGY kinase family.

It carries out the reaction glycerol + ATP = sn-glycerol 3-phosphate + ADP + H(+). The protein operates within polyol metabolism; glycerol degradation via glycerol kinase pathway; sn-glycerol 3-phosphate from glycerol: step 1/1. With respect to regulation, inhibited by fructose 1,6-bisphosphate (FBP). Key enzyme in the regulation of glycerol uptake and metabolism. Catalyzes the phosphorylation of glycerol to yield sn-glycerol 3-phosphate. In Nitrobacter hamburgensis (strain DSM 10229 / NCIMB 13809 / X14), this protein is Glycerol kinase.